The chain runs to 285 residues: Nucleotide-binding protein PFLU_0879 (285 aa).

8–15 (GRSGSGKS) contributes to the ATP binding site. 60–63 (DARN) provides a ligand contact to GTP.

Belongs to the RapZ-like family.

Displays ATPase and GTPase activities. The polypeptide is Nucleotide-binding protein PFLU_0879 (Pseudomonas fluorescens (strain SBW25)).